A 270-amino-acid chain; its full sequence is Pyrroline-5-carboxylate reductase (270 aa).

It belongs to the pyrroline-5-carboxylate reductase family.

It localises to the cytoplasm. It catalyses the reaction L-proline + NADP(+) = (S)-1-pyrroline-5-carboxylate + NADPH + 2 H(+). The enzyme catalyses L-proline + NAD(+) = (S)-1-pyrroline-5-carboxylate + NADH + 2 H(+). It participates in amino-acid biosynthesis; L-proline biosynthesis; L-proline from L-glutamate 5-semialdehyde: step 1/1. Functionally, catalyzes the reduction of 1-pyrroline-5-carboxylate (PCA) to L-proline. This Methanosarcina acetivorans (strain ATCC 35395 / DSM 2834 / JCM 12185 / C2A) protein is Pyrroline-5-carboxylate reductase.